The primary structure comprises 137 residues: Large ribosomal subunit protein uL16 (137 aa).

This sequence belongs to the universal ribosomal protein uL16 family. In terms of assembly, part of the 50S ribosomal subunit.

Functionally, binds 23S rRNA and is also seen to make contacts with the A and possibly P site tRNAs. This Xylella fastidiosa (strain M23) protein is Large ribosomal subunit protein uL16.